Here is a 525-residue protein sequence, read N- to C-terminus: MTPTELKTAVERRRTFAIISHPDAGKTTITEQLLLFGGVIRQAGTVKGKKSGQFAKSDWMDIEKQRGISVTSSVMQFDYAGKRINILDTPGHEDFSEDTYRTLMAVDAAVMVIDSAKGIEPQTKKLFKVCKMRGIPIFTFMNKLDRDGREPLDLIAELEELLDIEGCAMNWPIGMGKDLRGLYDIANKRIEMYRPEDEANPYLALDEEGKIAGDNPLKEDSVYTQALDDIELIGEAGNAYDPAKIATGDQTPIFFGSALTNFGVKTFLEAFVDMAPAPEAHQTQEETQVEPTNEDFSGFIFKIQANMNPAHRDRIAFVRVCSGEFQRGIDVTLTRTGKKMRLNNSTEFMADAREQVTSAVAGDIVGLYDTGNFQIGDTIHTGKEAISFEKLPQFTPELFMRVTAKNVMKQKSFHKGIQQLVQEGAIQLYKTYTTSDYILGAVGQLQFEVFQYRMQHEYNSEVIMEPIGSRTARWIDPEKLDQSMSSSRNLLVKDIHDQPLFLFENKFAERWFQDKYPEVKLTAKL.

Residues 11 to 279 (ERRRTFAIIS…AFVDMAPAPE (269 aa)) enclose the tr-type G domain. Residues 20 to 27 (SHPDAGKT), 88 to 92 (DTPGH), and 142 to 145 (NKLD) each bind GTP.

Belongs to the TRAFAC class translation factor GTPase superfamily. Classic translation factor GTPase family. PrfC subfamily.

The protein localises to the cytoplasm. Increases the formation of ribosomal termination complexes and stimulates activities of RF-1 and RF-2. It binds guanine nucleotides and has strong preference for UGA stop codons. It may interact directly with the ribosome. The stimulation of RF-1 and RF-2 is significantly reduced by GTP and GDP, but not by GMP. The sequence is that of Peptide chain release factor 3 from Latilactobacillus sakei subsp. sakei (strain 23K) (Lactobacillus sakei subsp. sakei).